Reading from the N-terminus, the 646-residue chain is Secretogranin-1 (646 aa).

Residues 1-20 (MQPAALLGLLGATVVAAVSS) form the signal peptide. Cysteine 36 and cysteine 57 are joined by a disulfide. Residues 67–90 (ELKNEEKSENENTRFEVRLLRDPA) show a composition bias toward basic and acidic residues. A disordered region spans residues 67 to 483 (ELKNEEKSEN…GKQYAPHHIT (417 aa)). Serine 74 carries the phosphoserine modification. 2 positions are modified to phosphothreonine: threonine 79 and threonine 92. Serine 93, serine 99, serine 100, and serine 104 each carry phosphoserine. The O-linked (Xyl...) (chondroitin sulfate) serine glycan is linked to serine 93. Threonine 113 is a glycosylation site (O-linked (GalNAc...) threonine). Composition is skewed to basic and acidic residues over residues 119–128 (SGGHSRERAG) and 137–173 (KEAKTRYSKSEGQNREEEMVKYQKRERGEVGSEERLS). Phosphoserine is present on residues serine 123, serine 146, and serine 168. Positions 182–191 (AFLNQRNQTP) are enriched in polar residues. Residue threonine 190 is glycosylated (O-linked (GalNAc...) threonine). Serine 205 is subject to Phosphoserine. Residues 208-228 (GLEKSHSRERSSQESGEETKS) are compositionally biased toward basic and acidic residues. The O-linked (Xyl...) (chondroitin sulfate) serine glycan is linked to serine 222. Basic residues predominate over residues 260–270 (RHSRPRHHHGR). Phosphoserine is present on residues serine 276, serine 277, and serine 295. Tyrosine 315 bears the Sulfotyrosine mark. Residues 340-361 (GRGEHQALRRPSEESLEQENKR) show a composition bias toward basic and acidic residues. Phosphoserine is present on residues serine 351 and serine 354. At tyrosine 374 the chain carries Phosphotyrosine. Phosphoserine occurs at positions 375 and 378. Over residues 406 to 425 (TDEKRFLGETHHRVQESQRD) the composition is skewed to basic and acidic residues. A Sulfotyrosine modification is found at tyrosine 441. 2 stretches are compositionally biased toward basic and acidic residues: residues 442–451 (GEEKGEEAAR) and 459–472 (DPRDADENREEARL). The residue at position 476 (glutamine 476) is a Pyrrolidone carboxylic acid; in secretogranin-1(476-566). Serine 502, serine 503, and serine 514 each carry phosphoserine. Sulfotyrosine is present on tyrosine 535. Glutamine 567 is subject to Pyrrolidone carboxylic acid; in peptide BAM-1745. A Phosphoserine modification is found at serine 584. The segment at 588-620 (PDFYDSEEQMSPQHTAENEEEKAGQGVLTEEEE) is disordered. Sulfotyrosine is present on tyrosine 591. Phosphoserine occurs at positions 593 and 598. The residue at position 634 (glutamine 634) is a Pyrrolidone carboxylic acid; in Secretolytin; partial.

It belongs to the chromogranin/secretogranin protein family. Interacts with ITPR1 in the secretory granules. O-glycosylated by the trisaccharide, GalNAc-Gal-NeuAc, on 2 sites in the N-terminal. May be glycated. In terms of processing, extensively phosphorylated. Post-translationally, differentially processed on numerous sites throughout the sequence depending on tissue type.

The protein localises to the cytoplasmic vesicle. The protein resides in the secretory vesicle membrane. Its subcellular location is the secreted. Functionally, secretogranin-1 is a neuroendocrine secretory granule protein, which may be the precursor for other biologically active peptides. The 16 pairs of basic AA distributed throughout its sequence may be used as proteolytic cleavage sites. In terms of biological role, secretolytin has antibacterial activity. This chain is Secretogranin-1 (CHGB), found in Bos taurus (Bovine).